Reading from the N-terminus, the 532-residue chain is Putative cysteine ligase BshC (532 aa).

Residues Met431–Arg451 adopt a coiled-coil conformation.

It belongs to the BshC family.

The protein is Putative cysteine ligase BshC of Koribacter versatilis (strain Ellin345).